A 134-amino-acid polypeptide reads, in one-letter code: Large ribosomal subunit protein uL16c (134 aa).

Belongs to the universal ribosomal protein uL16 family. As to quaternary structure, part of the 50S ribosomal subunit.

It is found in the plastid. The protein resides in the chloroplast. The protein is Large ribosomal subunit protein uL16c of Nephroselmis olivacea (Green alga).